We begin with the raw amino-acid sequence, 114 residues long: Ribosome-binding factor A (114 aa).

The protein belongs to the RbfA family. As to quaternary structure, monomer. Binds 30S ribosomal subunits, but not 50S ribosomal subunits or 70S ribosomes.

The protein localises to the cytoplasm. In terms of biological role, one of several proteins that assist in the late maturation steps of the functional core of the 30S ribosomal subunit. Associates with free 30S ribosomal subunits (but not with 30S subunits that are part of 70S ribosomes or polysomes). Required for efficient processing of 16S rRNA. May interact with the 5'-terminal helix region of 16S rRNA. This Macrococcus caseolyticus (strain JCSC5402) (Macrococcoides caseolyticum) protein is Ribosome-binding factor A.